A 736-amino-acid chain; its full sequence is Catalase-peroxidase (736 aa).

Positions 1-25 (MSENGKCPVTGKTSKPVAGGGTSNQ) are disordered. The tryptophyl-tyrosyl-methioninium (Trp-Tyr) (with M-250) cross-link spans 96-224 (WHSAGTYRMG…LAAVQMGLIY (129 aa)). The Proton acceptor role is filled by His-97. A cross-link (tryptophyl-tyrosyl-methioninium (Tyr-Met) (with W-96)) is located at residues 224–250 (YVNPEGPDGNPDPIASGKDVRETFARM). His-265 contributes to the heme b binding site. Residues 294–313 (GWKSSHGRGKGGDTISSGIE) are disordered.

It belongs to the peroxidase family. Peroxidase/catalase subfamily. Homodimer or homotetramer. Requires heme b as cofactor. In terms of processing, formation of the three residue Trp-Tyr-Met cross-link is important for the catalase, but not the peroxidase activity of the enzyme.

It catalyses the reaction H2O2 + AH2 = A + 2 H2O. The enzyme catalyses 2 H2O2 = O2 + 2 H2O. Functionally, bifunctional enzyme with both catalase and broad-spectrum peroxidase activity. This Desulfatibacillum aliphaticivorans protein is Catalase-peroxidase.